The sequence spans 92 residues: UPF0728 protein (92 aa).

The protein belongs to the UPF0728 family.

In Branchiostoma floridae (Florida lancelet), this protein is UPF0728 protein.